The following is a 332-amino-acid chain: Beta-ketoacyl-[acyl-carrier-protein] synthase III 2 (332 aa).

Residues cysteine 115 and histidine 252 contribute to the active site. Positions 253–257 are ACP-binding; that stretch reads SANLR. Asparagine 282 is an active-site residue.

The protein belongs to the thiolase-like superfamily. FabH family. In terms of assembly, homodimer.

The protein resides in the cytoplasm. The enzyme catalyses malonyl-[ACP] + acetyl-CoA + H(+) = 3-oxobutanoyl-[ACP] + CO2 + CoA. The protein operates within lipid metabolism; fatty acid biosynthesis. Functionally, catalyzes the condensation reaction of fatty acid synthesis by the addition to an acyl acceptor of two carbons from malonyl-ACP. Catalyzes the first condensation reaction which initiates fatty acid synthesis and may therefore play a role in governing the total rate of fatty acid production. Possesses both acetoacetyl-ACP synthase and acetyl transacylase activities. Its substrate specificity determines the biosynthesis of branched-chain and/or straight-chain of fatty acids. This Halalkalibacterium halodurans (strain ATCC BAA-125 / DSM 18197 / FERM 7344 / JCM 9153 / C-125) (Bacillus halodurans) protein is Beta-ketoacyl-[acyl-carrier-protein] synthase III 2.